The primary structure comprises 349 residues: Alanine racemase (349 aa).

Catalysis depends on Lys-35, which acts as the Proton acceptor; specific for D-alanine. Lys-35 bears the N6-(pyridoxal phosphate)lysine mark. Arg-130 serves as a coordination point for substrate. The Proton acceptor; specific for L-alanine role is filled by Tyr-244. Met-292 is a binding site for substrate.

This sequence belongs to the alanine racemase family. It depends on pyridoxal 5'-phosphate as a cofactor.

It catalyses the reaction L-alanine = D-alanine. The protein operates within amino-acid biosynthesis; D-alanine biosynthesis; D-alanine from L-alanine: step 1/1. In terms of biological role, catalyzes the interconversion of L-alanine and D-alanine. May also act on other amino acids. In Cereibacter sphaeroides (strain KD131 / KCTC 12085) (Rhodobacter sphaeroides), this protein is Alanine racemase (alr).